Consider the following 315-residue polypeptide: Homoserine O-succinyltransferase (315 aa).

Catalysis depends on C142, which acts as the Acyl-thioester intermediate. 2 residues coordinate substrate: K163 and S192. H235 (proton acceptor) is an active-site residue. E237 is a catalytic residue. Substrate is bound at residue R249. Residues 249–258 (RDCEKSDNAP) show a composition bias toward basic and acidic residues. The segment at 249–271 (RDCEKSDNAPKPENYFPDDDATK) is disordered.

It belongs to the MetA family.

The protein localises to the cytoplasm. It carries out the reaction L-homoserine + succinyl-CoA = O-succinyl-L-homoserine + CoA. It participates in amino-acid biosynthesis; L-methionine biosynthesis via de novo pathway; O-succinyl-L-homoserine from L-homoserine: step 1/1. Transfers a succinyl group from succinyl-CoA to L-homoserine, forming succinyl-L-homoserine. The chain is Homoserine O-succinyltransferase from Pseudoalteromonas translucida (strain TAC 125).